The chain runs to 191 residues: 3-isopropylmalate dehydratase small subunit (191 aa).

Belongs to the LeuD family. LeuD type 1 subfamily. Heterodimer of LeuC and LeuD.

It carries out the reaction (2R,3S)-3-isopropylmalate = (2S)-2-isopropylmalate. Its pathway is amino-acid biosynthesis; L-leucine biosynthesis; L-leucine from 3-methyl-2-oxobutanoate: step 2/4. Catalyzes the isomerization between 2-isopropylmalate and 3-isopropylmalate, via the formation of 2-isopropylmaleate. This is 3-isopropylmalate dehydratase small subunit from Anaeromyxobacter dehalogenans (strain 2CP-C).